Here is a 970-residue protein sequence, read N- to C-terminus: m7GpppN-mRNA hydrolase (970 aa).

A Nudix hydrolase domain is found at 101-228 (KSIPVRGAAI…IKYYLINSMM (128 aa)). A Phosphoserine modification is found at S116. Residues 134–155 (GKISKDENDIDCCIREVKEEIG) carry the Nudix box motif. Residues E149 and E153 each coordinate Mn(2+). Residues 302-314 (QHLKEQSGEHNQQ) show a composition bias toward basic and acidic residues. 4 disordered regions span residues 302-341 (QHLK…ANNK), 417-465 (AVSQ…PKLK), 501-520 (SSQK…NDSV), and 528-692 (YEDF…LSST). The span at 315–334 (KDQQSSFSSQQQPSIFPSLS) shows a compositional bias: low complexity. A Phosphoserine modification is found at S439. Residues 528-539 (YEDFESSSDEEV) are compositionally biased toward acidic residues. Over residues 560 to 576 (SEKDSRRSQKEKPRNDA) the composition is skewed to basic and acidic residues. Residues 577 to 590 (SKTNLNASAESNSV) are compositionally biased toward polar residues. Residues 596–608 (KSSPSTQSKQNSS) are compositionally biased toward low complexity. The segment covering 625–637 (DAYEVFESSSDEE) has biased composition (acidic residues). T677 bears the Phosphothreonine mark. Residues 677–691 (TESNKSINETVGLSS) show a composition bias toward polar residues. A phosphoserine mark is found at S679, S682, S751, S771, S773, and S778. The interval 831–867 (LKKNDSTGYPRTEGGPSSEMSTSMKRNDATNNQELDK) is disordered. Positions 848–863 (SEMSTSMKRNDATNNQ) are enriched in polar residues.

The protein belongs to the Nudix hydrolase family. DCP2 subfamily. In terms of assembly, component of the decapping complex composed of DCP1 and DCP2. Interacts with mRNA, LSM2, LSM4 and LSM8. Interacts with EDC3. Mn(2+) is required as a cofactor.

The protein localises to the cytoplasm. It is found in the P-body. The catalysed reaction is a 5'-end (N(7)-methyl 5'-triphosphoguanosine)-ribonucleoside in mRNA + H2O = N(7)-methyl-GDP + a 5'-end phospho-ribonucleoside in mRNA + 2 H(+). Functionally, catalytic component of the decapping complex necessary for the degradation of mRNAs, both in normal mRNA turnover and in nonsense-mediated mRNA decay. Removes the 7-methyl guanine cap structure from mRNA molecules, yielding a 5'-phosphorylated mRNA fragment and 7m-GDP. Decapping is the major pathway of mRNA degradation in yeast and occurs through deadenylation, decapping and subsequent 5' to 3' exonucleolytic decay of the transcript body. Blocks autophagy in nutrient-rich conditions by repressing the expression of ATG-related genes through degradation of their transcripts. The sequence is that of m7GpppN-mRNA hydrolase from Saccharomyces cerevisiae (strain ATCC 204508 / S288c) (Baker's yeast).